A 97-amino-acid chain; its full sequence is Sm-like protein LSM3A (97 aa).

S2 carries the N-acetylserine modification. The Sm domain occupies 11–96 (EPLDLIRLSI…VILVSPPLRT (86 aa)).

Belongs to the snRNP Sm proteins family. As to quaternary structure, component of the heptameric LSM1-LSM7 complex that forms a seven-membered ring structure with a donut shape. The LSM subunits are arranged in the order LSM1, LSM2, LSM3, LSM6, LSM5, LSM7 and LSM4. Component of the heptameric LSM2-LSM8 complex that forms a seven-membered ring structure with a donut shape. The LSM subunits are arranged in the order LSM8, LSM2, LSM3, LSM6, LSM5, LSM7 and LSM4. LSM3A subunit interacts only with its two neighboring subunits, LSM2 and LSM6A or LSM6B. In terms of tissue distribution, expressed in roots, leaves, stems, flowers and siliques.

It localises to the cytoplasm. The protein localises to the nucleus. Functionally, component of LSM protein complexes, which are involved in RNA processing. Component of the cytoplasmic LSM1-LSM7 complex which is involved in mRNA degradation by promoting decapping and leading to accurate 5'-3' mRNA decay. The cytoplasmic LSM1-LSM7 complex regulates developmental gene expression by the decapping of specific development-related transcripts. Component of the nuclear LSM2-LSM8 complex which is involved splicing nuclear mRNAs. LSM2-LSM8 binds directly to the U6 small nuclear RNAs (snRNAs) and is essential for accurate splicing of selected development-related mRNAs through the stabilization of the spliceosomal U6 snRNA. Plays a critical role in the regulation of development-related gene expression. In Arabidopsis thaliana (Mouse-ear cress), this protein is Sm-like protein LSM3A.